A 351-amino-acid chain; its full sequence is Beta-hexosaminidase (351 aa).

Residues Asp-62, Arg-70, Arg-134, and 164 to 165 (KH) each bind substrate. His-177 functions as the Proton donor/acceptor in the catalytic mechanism. Asp-249 serves as the catalytic Nucleophile.

Belongs to the glycosyl hydrolase 3 family. NagZ subfamily. As to quaternary structure, monomer.

Its subcellular location is the cytoplasm. It carries out the reaction Hydrolysis of terminal non-reducing N-acetyl-D-hexosamine residues in N-acetyl-beta-D-hexosaminides.. It participates in cell wall biogenesis; peptidoglycan recycling. Functionally, plays a role in peptidoglycan recycling by cleaving the terminal beta-1,4-linked N-acetylglucosamine (GlcNAc) from peptide-linked peptidoglycan fragments, giving rise to free GlcNAc, anhydro-N-acetylmuramic acid and anhydro-N-acetylmuramic acid-linked peptides. In Pasteurella multocida (strain Pm70), this protein is Beta-hexosaminidase.